A 60-amino-acid polypeptide reads, in one-letter code: UPF0434 protein PC1_1771 (60 aa).

This sequence belongs to the UPF0434 family.

The chain is UPF0434 protein PC1_1771 from Pectobacterium carotovorum subsp. carotovorum (strain PC1).